A 1005-amino-acid chain; its full sequence is MSGPDKGSDSGQTANDPKQKKARNGQMETYSCARCRKLKKKCPRQLPECSNCLKAREPCNYPGRAPRRTKKELRDAIMKGEVLPSMRRKHRKIEKELKTADLRHLESVDDRPVNQVMGGSMPPLGAYRGGEQQYNNGPPISGIDGNDSINRGKAQSVGSYQILPPQRKSKLVLDQNPKFVHSQSSALKTNEYPVPIMSPHIANQVYPEGVSSLISALNTMNDNVSANTPIALSYLQLQKLHQEQQQIQQQQIQQQQQHQHLVQQHLQHVRADATSILPPVTSQTVYTPIPGPRTSQIPFGFTHGYTASAPPPLMQPYSMPTSPFESREKQQQFDNIQYHPVYKIPPIAARQSPIDEIIGIENGSISIDAGSITREVVNSRMKGPHSTSWVNEDGSPKPIKKSLLEKFVSAYFEHNHRLFPMVDKVTFLKKLATINSFESIEMLAVNNPELPKTFIFEIYMIMAIGCTTLQRAGKLTTDEGHLYEHLAYLAMRNFRDILHQQDITTLRCLILLGIYSFFEPKGVSSWTISGIAMRLAIELGLNRPLTAKEMGDMSAVEVESRYRVFWSAYCFERVVATSLGRVSAIDDEDIGIPLPRALYDSEKEDIEVTNLIISLRKMGGKIYKEVHSLSAGRKDITMEQKQLIIQKLRKELDDIYEEECEKRRLKGKSRSSKRFEKSKESDSDRGVTEEDVKSGNENLIGLLASDDVSMTEHGQSIDNTLESTPLPTTIPTTIVNDSVDQHSTLENIPTSATSKDQIETIITKPTANIMNDQTDSDPLPKVDNKPISNNEEGPKSLKEGNSEQNPSENISPEDVTLTKTDNSENKESSLRSNSNISFHISNVWLEMRYTQLQILLYRPSALIPKPPIESLTVLGEFCLAAWRHTYTLYKEKLLPLNWITLFRTLTICNTILYCLCQWSIDLVASTIEIQQCVEILQHFGEKWVFAMKCADVFQNISNTIVEISLSQGQDPNIDKLTRELFGASNAYLEILNENNVDVSWEDRFR.

The disordered stretch occupies residues 1-28 (MSGPDKGSDSGQTANDPKQKKARNGQME). The zn(2)-C6 fungal-type DNA-binding region spans 32–59 (CARCRKLKKKCPRQLPECSNCLKAREPC). Disordered regions lie at residues 129-151 (GGEQQYNNGPPISGIDGNDSINR), 666-693 (KGKSRSSKRFEKSKESDSDRGVTEEDVK), and 763-831 (TKPT…SSLR). A compositionally biased stretch (basic and acidic residues) spans 673 to 693 (KRFEKSKESDSDRGVTEEDVK). Positions 763-773 (TKPTANIMNDQ) are enriched in polar residues. The span at 792–801 (EGPKSLKEGN) shows a compositional bias: basic and acidic residues.

It localises to the nucleus. Its function is as follows. Transcription factor that negatively regulates pleiotropic drug resistance genes, including the ABC transporter genes CDR1, PDH1, and YOR1. The chain is Negative regulator of pleiotropic drug resistance STB5 from Candida glabrata (strain ATCC 2001 / BCRC 20586 / JCM 3761 / NBRC 0622 / NRRL Y-65 / CBS 138) (Yeast).